The chain runs to 460 residues: Cysteine--tRNA ligase (460 aa).

Cysteine 28 lines the Zn(2+) pocket. The 'HIGH' region signature appears at 30 to 40 (MTVYDYCHLGH). Zn(2+) contacts are provided by cysteine 209, histidine 234, and glutamate 238. Residues 266–270 (KMSKS) carry the 'KMSKS' region motif. Residue lysine 269 coordinates ATP.

Belongs to the class-I aminoacyl-tRNA synthetase family. In terms of assembly, monomer. Requires Zn(2+) as cofactor.

It is found in the cytoplasm. It catalyses the reaction tRNA(Cys) + L-cysteine + ATP = L-cysteinyl-tRNA(Cys) + AMP + diphosphate. In Pseudomonas putida (strain W619), this protein is Cysteine--tRNA ligase.